Here is a 609-residue protein sequence, read N- to C-terminus: Alpha-fetoprotein (609 aa).

A signal peptide spans 1–18 (MKWVVSILLIFLLNSTES). 3 consecutive Albumin domains span residues 19–210 (RTMH…ATIT), 211–402 (KELR…EELQ), and 403–601 (KYIQ…QLIS). H22 provides a ligand contact to Cu(2+). Disulfide bonds link C99–C114, C113–C124, C148–C193, C192–C201, C224–C270, C269–C277, C289–C303, and C302–C313. Phosphoserine occurs at positions 111 and 115. N-linked (GlcNAc...) asparagine glycosylation is present at N251. S344 carries the post-translational modification Phosphoserine. Intrachain disulfides connect C384/C393, C416/C462, C461/C472, C485/C501, C500/C511, C538/C583, and C582/C591.

This sequence belongs to the ALB/AFP/VDB family. In terms of assembly, dimeric and trimeric forms have been found in addition to the monomeric form. Post-translationally, sulfated. In terms of tissue distribution, plasma.

It is found in the secreted. In terms of biological role, binds copper, nickel, and fatty acids as well as, and bilirubin less well than, serum albumin. The polypeptide is Alpha-fetoprotein (AFP) (Equus caballus (Horse)).